Here is a 159-residue protein sequence, read N- to C-terminus: Nucleotide-binding protein Pmen_0939 (159 aa).

It belongs to the YajQ family.

Nucleotide-binding protein. The polypeptide is Nucleotide-binding protein Pmen_0939 (Ectopseudomonas mendocina (strain ymp) (Pseudomonas mendocina)).